The sequence spans 557 residues: 2-succinyl-5-enolpyruvyl-6-hydroxy-3-cyclohexene-1-carboxylate synthase (557 aa).

This sequence belongs to the TPP enzyme family. MenD subfamily. As to quaternary structure, homodimer. Requires Mg(2+) as cofactor. It depends on Mn(2+) as a cofactor. The cofactor is thiamine diphosphate.

The catalysed reaction is isochorismate + 2-oxoglutarate + H(+) = 5-enolpyruvoyl-6-hydroxy-2-succinyl-cyclohex-3-ene-1-carboxylate + CO2. It functions in the pathway quinol/quinone metabolism; 1,4-dihydroxy-2-naphthoate biosynthesis; 1,4-dihydroxy-2-naphthoate from chorismate: step 2/7. It participates in quinol/quinone metabolism; menaquinone biosynthesis. Functionally, catalyzes the thiamine diphosphate-dependent decarboxylation of 2-oxoglutarate and the subsequent addition of the resulting succinic semialdehyde-thiamine pyrophosphate anion to isochorismate to yield 2-succinyl-5-enolpyruvyl-6-hydroxy-3-cyclohexene-1-carboxylate (SEPHCHC). In Staphylococcus aureus (strain MRSA252), this protein is 2-succinyl-5-enolpyruvyl-6-hydroxy-3-cyclohexene-1-carboxylate synthase.